Here is a 356-residue protein sequence, read N- to C-terminus: Histidinol-phosphate aminotransferase 2 (356 aa).

An N6-(pyridoxal phosphate)lysine modification is found at Lys217.

This sequence belongs to the class-II pyridoxal-phosphate-dependent aminotransferase family. Histidinol-phosphate aminotransferase subfamily. Homodimer. It depends on pyridoxal 5'-phosphate as a cofactor.

It carries out the reaction L-histidinol phosphate + 2-oxoglutarate = 3-(imidazol-4-yl)-2-oxopropyl phosphate + L-glutamate. The protein operates within amino-acid biosynthesis; L-histidine biosynthesis; L-histidine from 5-phospho-alpha-D-ribose 1-diphosphate: step 7/9. The sequence is that of Histidinol-phosphate aminotransferase 2 from Burkholderia pseudomallei (strain 1710b).